Consider the following 737-residue polypeptide: MPRYKTVEQVLSLMKDITRVRNIGIIAHVDHGKTTTSDTLLAAAGIISQKVAGEALALDYLSVEQQRGITVKAANISLYHEIEGKGYVINLIDTPGHVDFSGRVTRSLRILDGSIVVVDAVEGIMTQTETVLRQSLEERVRPILFINKVDRLVKELKLSPQEIQKKLIDMIVEINNLIEMYAEPEYKDAWKIKPELGNVVFGSAKDKWGFSVPIAQKKGVKFSDVVNAYSSGDKSKVEELANRVPIHEALLETVIKFVPNPRDAQKYRIPKIWKGDLDSDIAKAMINADPNGPIVLMISDMKVDPHAGLVATGRVFSGTLRAGEEIWLVNAKRQQRVLQVSLYMGPTRELAEEIPAGNIAAALGLDQARSGETAVDIKYKDANVGSFESLHYVSEPVVTISVEPKNPKDLNKMIDALRKLSIEDPNLLVKINEETGEYLLSGMGFLHLEVSLQLLKENYGVDVVTSPPIVVYRESIRTKSQVFEGKSPNKHNKLYISVEPLNEQTIELIANGTIKEDMDSKEMARILKEQADWDYDEAKKIVAIDENINVFVNATSGVQHLREVMDTILQGFRLAMKEGPLAHEPIRGLKVVLHDAIIHEDPAHRGPAQLYPAVRNAIFAGFLTSKPTLLEPLQKLDIRVPMDFVGNVSGVITRKRGKILNMTQMGSIARITAEIPVSESFELASELRAASAGRAFWGTEFSRWAPVPDSLLLDVIMKIRERKGLPKELPKVEDFLA.

The tr-type G domain occupies 18 to 262; sequence TRVRNIGIIA…TVIKFVPNPR (245 aa). Residues 27-34, 93-97, and 147-150 contribute to the GTP site; these read AHVDHGKT, DTPGH, and NKVD. Position 604 is a diphthamide (histidine 604).

The protein belongs to the TRAFAC class translation factor GTPase superfamily. Classic translation factor GTPase family. EF-G/EF-2 subfamily.

The protein resides in the cytoplasm. Functionally, catalyzes the GTP-dependent ribosomal translocation step during translation elongation. During this step, the ribosome changes from the pre-translocational (PRE) to the post-translocational (POST) state as the newly formed A-site-bound peptidyl-tRNA and P-site-bound deacylated tRNA move to the P and E sites, respectively. Catalyzes the coordinated movement of the two tRNA molecules, the mRNA and conformational changes in the ribosome. The sequence is that of Elongation factor 2 (fusA) from Sulfurisphaera tokodaii (strain DSM 16993 / JCM 10545 / NBRC 100140 / 7) (Sulfolobus tokodaii).